The following is a 141-amino-acid chain: HTH-type transcriptional repressor NsrR (141 aa).

An HTH rrf2-type domain is found at 2–129; it reads QLTSFTDYAL…DDCSIAELLD (128 aa). A DNA-binding region (H-T-H motif) is located at residues 28–51; sequence ITDVTELFGVSRNHMVKVINRLGQ. 3 residues coordinate [2Fe-2S] cluster: cysteine 91, cysteine 96, and cysteine 102.

The cofactor is [2Fe-2S] cluster.

In terms of biological role, nitric oxide-sensitive repressor of genes involved in protecting the cell against nitrosative stress. May require iron for activity. The polypeptide is HTH-type transcriptional repressor NsrR (Vibrio vulnificus (strain CMCP6)).